A 90-amino-acid polypeptide reads, in one-letter code: MFGLGGAPQISSEQKLQAAEAELDMVTGMFNQLVDQCHSKCINKSYGDSDITKQEALCLDRCVAKYFDTNVQVGEHMQKLGQSGQFMGRK.

Residues 37 to 62 (CHSKCINKSYGDSDITKQEALCLDRC) carry the Twin CX3C motif motif. Disulfide bonds link cysteine 37–cysteine 62 and cysteine 41–cysteine 58.

It belongs to the small Tim family. As to quaternary structure, heterohexamer; composed of 3 copies of TIM9 and 3 copies of TIM10, named soluble 70 kDa complex. Associates directly with the TIM22 complex, whose core is composed of TIM22 and TIM54. Interacts with the transmembrane regions of multi-pass transmembrane proteins in transit.

Its subcellular location is the mitochondrion inner membrane. Its function is as follows. Mitochondrial intermembrane chaperone that participates in the import and insertion of multi-pass transmembrane proteins into the mitochondrial inner membrane. Also required for the transfer of beta-barrel precursors from the TOM complex to the sorting and assembly machinery (SAM complex) of the outer membrane. Acts as a chaperone-like protein that protects the hydrophobic precursors from aggregation and guide them through the mitochondrial intermembrane space. This Pichia sorbitophila (strain ATCC MYA-4447 / BCRC 22081 / CBS 7064 / NBRC 10061 / NRRL Y-12695) (Hybrid yeast) protein is Mitochondrial import inner membrane translocase subunit Tim10 (TIM10).